Here is a 112-residue protein sequence, read N- to C-terminus: Colipase (112 aa).

The signal sequence occupies residues 1–17 (MEKVLILLLVALAVAYA). Positions 18–22 (VPDPR) are cleaved as a propeptide — enterostatin, activation peptide. Cystine bridges form between C34-C45, C40-C56, C44-C78, C66-C86, and C80-C104.

Belongs to the colipase family. As to quaternary structure, forms a 1:1 stoichiometric complex with pancreatic lipase.

It is found in the secreted. In terms of biological role, colipase is a cofactor of pancreatic lipase. It allows the lipase to anchor itself to the lipid-water interface. Without colipase the enzyme is washed off by bile salts, which have an inhibitory effect on the lipase. Enterostatin has a biological activity as a satiety signal. The polypeptide is Colipase (CLPS) (Bos taurus (Bovine)).